The sequence spans 256 residues: Pyridoxine 5'-phosphate synthase (256 aa).

Residues N8 and R19 each contribute to the 3-amino-2-oxopropyl phosphate site. The Proton acceptor role is filled by H44. The 1-deoxy-D-xylulose 5-phosphate site is built by R46 and H51. E74 (proton acceptor) is an active-site residue. T111 contacts 1-deoxy-D-xylulose 5-phosphate. H202 (proton donor) is an active-site residue. Residues D203 and 225-226 (GH) contribute to the 3-amino-2-oxopropyl phosphate site.

Belongs to the PNP synthase family. Homooctamer; tetramer of dimers.

It localises to the cytoplasm. It catalyses the reaction 3-amino-2-oxopropyl phosphate + 1-deoxy-D-xylulose 5-phosphate = pyridoxine 5'-phosphate + phosphate + 2 H2O + H(+). It participates in cofactor biosynthesis; pyridoxine 5'-phosphate biosynthesis; pyridoxine 5'-phosphate from D-erythrose 4-phosphate: step 5/5. Its function is as follows. Catalyzes the complicated ring closure reaction between the two acyclic compounds 1-deoxy-D-xylulose-5-phosphate (DXP) and 3-amino-2-oxopropyl phosphate (1-amino-acetone-3-phosphate or AAP) to form pyridoxine 5'-phosphate (PNP) and inorganic phosphate. The chain is Pyridoxine 5'-phosphate synthase from Xanthomonas campestris pv. campestris (strain 8004).